A 529-amino-acid chain; its full sequence is Extracellular signal-regulated kinase 1 (529 aa).

Disordered regions lie at residues 1–20 and 100–131; these read MEPE…THQS and QQNQ…SNFN. Residues 8–20 show a composition bias toward polar residues; that stretch reads FQSQMDSDNTHQS. Positions 100–117 are enriched in low complexity; it reads QQNQQQQSQQMTQQQLQQ. The 291-residue stretch at 149-439 folds into the Protein kinase domain; it reads YSIVKCIGHG…EALAHPYFQS (291 aa). Residues 155 to 163 and Lys-178 contribute to the ATP site; that span reads IGHGAYGVV. Asp-275 acts as the Proton acceptor in catalysis. Position 309 is a phosphothreonine (Thr-309). Positions 309–311 match the TXY motif; it reads TEY. Residue Tyr-311 is modified to Phosphotyrosine.

The protein belongs to the protein kinase superfamily. CMGC Ser/Thr protein kinase family. MAP kinase subfamily. Mg(2+) serves as cofactor. Dually phosphorylated on Thr-309 and Tyr-311, which activates the enzyme.

It catalyses the reaction L-seryl-[protein] + ATP = O-phospho-L-seryl-[protein] + ADP + H(+). The catalysed reaction is L-threonyl-[protein] + ATP = O-phospho-L-threonyl-[protein] + ADP + H(+). Its activity is regulated as follows. Activated by tyrosine and threonine phosphorylation. In terms of biological role, kinase involved in a signal transduction pathway. This chain is Extracellular signal-regulated kinase 1 (erkA), found in Dictyostelium discoideum (Social amoeba).